A 185-amino-acid polypeptide reads, in one-letter code: Ribosome-recycling factor (185 aa).

This sequence belongs to the RRF family.

It is found in the cytoplasm. Functionally, responsible for the release of ribosomes from messenger RNA at the termination of protein biosynthesis. May increase the efficiency of translation by recycling ribosomes from one round of translation to another. This chain is Ribosome-recycling factor, found in Ectopseudomonas mendocina (strain ymp) (Pseudomonas mendocina).